Consider the following 871-residue polypeptide: Alanine--tRNA ligase (871 aa).

Zn(2+) contacts are provided by H561, H565, C665, and H669.

It belongs to the class-II aminoacyl-tRNA synthetase family. Zn(2+) is required as a cofactor.

The protein resides in the cytoplasm. The enzyme catalyses tRNA(Ala) + L-alanine + ATP = L-alanyl-tRNA(Ala) + AMP + diphosphate. Its function is as follows. Catalyzes the attachment of alanine to tRNA(Ala) in a two-step reaction: alanine is first activated by ATP to form Ala-AMP and then transferred to the acceptor end of tRNA(Ala). Also edits incorrectly charged Ser-tRNA(Ala) and Gly-tRNA(Ala) via its editing domain. This is Alanine--tRNA ligase from Dehalococcoides mccartyi (strain ATCC BAA-2266 / KCTC 15142 / 195) (Dehalococcoides ethenogenes (strain 195)).